The primary structure comprises 374 residues: Eukaryotic translation initiation factor 3 subunit M (374 aa).

Ser-2 is modified (N-acetylserine). Residues Ser-2 and Ser-152 each carry the phosphoserine modification. The region spanning 180–339 (AASKVMVELL…RKVVVSHSTH (160 aa)) is the PCI domain. Lys-254 carries the post-translational modification N6-acetyllysine. Positions 344-374 (KQQWQQLYDTLNAWKQNLNKVKNSLLSLSDT) are interaction with HSV-1 and HSV-2. Residue Ser-367 is modified to Phosphoserine.

As to quaternary structure, component of the eukaryotic translation initiation factor 3 (eIF-3) complex, which is composed of 13 subunits: EIF3A, EIF3B, EIF3C, EIF3D, EIF3E, EIF3F, EIF3G, EIF3H, EIF3I, EIF3J, EIF3K, EIF3L and EIF3M. The eIF-3 complex appears to include 3 stable modules: module A is composed of EIF3A, EIF3B, EIF3G and EIF3I; module B is composed of EIF3F, EIF3H, and EIF3M; and module C is composed of EIF3C, EIF3D, EIF3E, EIF3K and EIF3L. EIF3C of module C binds EIF3B of module A and EIF3H of module B, thereby linking the three modules. EIF3J is a labile subunit that binds to the eIF-3 complex via EIF3B. The eIF-3 complex interacts with RPS6KB1 under conditions of nutrient depletion. Mitogenic stimulation leads to binding and activation of a complex composed of MTOR and RPTOR, leading to phosphorylation and release of RPS6KB1 and binding of EIF4B to eIF-3. As to expression, broadly expressed.

The protein resides in the cytoplasm. Its function is as follows. Component of the eukaryotic translation initiation factor 3 (eIF-3) complex, which is required for several steps in the initiation of protein synthesis. The eIF-3 complex associates with the 40S ribosome and facilitates the recruitment of eIF-1, eIF-1A, eIF-2:GTP:methionyl-tRNAi and eIF-5 to form the 43S pre-initiation complex (43S PIC). The eIF-3 complex stimulates mRNA recruitment to the 43S PIC and scanning of the mRNA for AUG recognition. The eIF-3 complex is also required for disassembly and recycling of post-termination ribosomal complexes and subsequently prevents premature joining of the 40S and 60S ribosomal subunits prior to initiation. The eIF-3 complex specifically targets and initiates translation of a subset of mRNAs involved in cell proliferation, including cell cycling, differentiation and apoptosis, and uses different modes of RNA stem-loop binding to exert either translational activation or repression. Functionally, (Microbial infection) May favor virus entry in case of infection with herpes simplex virus 1 (HSV1) or herpes simplex virus 2 (HSV2). In Homo sapiens (Human), this protein is Eukaryotic translation initiation factor 3 subunit M.